The following is a 310-amino-acid chain: ADP-L-glycero-D-manno-heptose-6-epimerase (310 aa).

NADP(+) is bound by residues 10 to 11 (FI), 31 to 32 (DN), Lys38, Lys53, 75 to 79 (EGACS), and Asn92. Tyr140 functions as the Proton acceptor in the catalytic mechanism. Residue Lys144 coordinates NADP(+). Asn169 contributes to the substrate binding site. Residues Val170 and Lys178 each coordinate NADP(+). Residue Lys178 is the Proton acceptor of the active site. Substrate is bound by residues Ser180, His187, 201–204 (FEGS), Arg209, and Tyr272.

It belongs to the NAD(P)-dependent epimerase/dehydratase family. HldD subfamily. In terms of assembly, homopentamer. The cofactor is NADP(+).

It catalyses the reaction ADP-D-glycero-beta-D-manno-heptose = ADP-L-glycero-beta-D-manno-heptose. It functions in the pathway nucleotide-sugar biosynthesis; ADP-L-glycero-beta-D-manno-heptose biosynthesis; ADP-L-glycero-beta-D-manno-heptose from D-glycero-beta-D-manno-heptose 7-phosphate: step 4/4. Its function is as follows. Catalyzes the interconversion between ADP-D-glycero-beta-D-manno-heptose and ADP-L-glycero-beta-D-manno-heptose via an epimerization at carbon 6 of the heptose. This Salmonella newport (strain SL254) protein is ADP-L-glycero-D-manno-heptose-6-epimerase.